A 63-amino-acid chain; its full sequence is Male-specific sperm protein Mst84Da (63 aa).

This sequence belongs to the MST(3)CGP family. Testis.

The protein is Male-specific sperm protein Mst84Da (Mst84Da) of Drosophila melanogaster (Fruit fly).